A 139-amino-acid chain; its full sequence is von Hippel-Lindau-like protein (139 aa).

The tract at residues 1–22 is disordered; the sequence is MPWRAGNGVGLEAQAGTQEAGP. Positions 54–135 are beta-domain; it reads SRIIICNHSP…GQPVFANITL (82 aa).

This sequence belongs to the VHL family. In terms of assembly, interacts via the beta domain with the ODD domain of HIF1A. This interaction is independent of prolyl hydroxylation of HIF1A. Abundantly expressed in the placenta.

Functions as a dominant-negative VHL to serve as a protector of HIFalpha. The sequence is that of von Hippel-Lindau-like protein (VHLL) from Homo sapiens (Human).